The following is a 128-amino-acid chain: uncharacterized protein (128 aa).

This is an uncharacterized protein from Mycobacterium tuberculosis (strain CDC 1551 / Oshkosh).